Here is a 228-residue protein sequence, read N- to C-terminus: ATP synthase subunit a 2 (228 aa).

6 helical membrane-spanning segments follow: residues 16 to 36, 74 to 94, 103 to 123, 139 to 159, 173 to 193, and 194 to 214; these read VGTT…GAWL, VFPF…SSLI, DLSA…WFGI, SPFL…ALAV, LLVL…LHIV, and EALV…AGAI.

It belongs to the ATPase A chain family. F-type ATPases have 2 components, CF(1) - the catalytic core - and CF(0) - the membrane proton channel. CF(1) has five subunits: alpha(3), beta(3), gamma(1), delta(1), epsilon(1). CF(0) has three main subunits: a(1), b(2) and c(9-12). The alpha and beta chains form an alternating ring which encloses part of the gamma chain. CF(1) is attached to CF(0) by a central stalk formed by the gamma and epsilon chains, while a peripheral stalk is formed by the delta and b chains.

The protein localises to the cell inner membrane. Key component of the proton channel; it plays a direct role in the translocation of protons across the membrane. The polypeptide is ATP synthase subunit a 2 (Pelobacter propionicus (strain DSM 2379 / NBRC 103807 / OttBd1)).